The sequence spans 224 residues: Protein YiiM (224 aa).

The MOSC domain maps to 26 to 163 (IQVDGELMLT…VSADAPLELV (138 aa)).

As to quaternary structure, monomer.

This Escherichia coli (strain K12) protein is Protein YiiM (yiiM).